Consider the following 1083-residue polypeptide: Protein HOS4 (1083 aa).

Disordered stretches follow at residues 1-233 (MNET…RKLV) and 267-328 (SSLF…YRDS). S14 and S16 each carry phosphoserine. A compositionally biased stretch (basic and acidic residues) spans 24–62 (TRREELEKISKQETSEEEDTAGKHEQRETLSEEVSDKFP). The residue at position 37 (T37) is a Phosphothreonine. Residue S67 is modified to Phosphoserine. A compositionally biased stretch (polar residues) spans 67 to 85 (SFRSQTTSVHQATQNNLNA). Residues 86 to 118 (KESEDLAHKNDASSHEGEVNGDSRPDDVPETNE) are compositionally biased toward basic and acidic residues. Positions 135 to 149 (PNVRNVDIQNHQPFS) are enriched in polar residues. The segment covering 151–166 (DQLRAMLKEPKRKTVD) has biased composition (basic and acidic residues). The span at 167–185 (DFIEEEGLGAVEEEDLSDE) shows a compositional bias: acidic residues. Residues 186 to 207 (VLEKNTTEPENVEKDIEYSDSD) show a composition bias toward basic and acidic residues. Residues 277–293 (VKETNNNLSNMNSSPAQ) are compositionally biased toward polar residues. Residue S290 is modified to Phosphoserine. Over residues 300 to 310 (VSRSNDSNKSS) the composition is skewed to low complexity. Over residues 314-323 (VSKRPKQKKG) the composition is skewed to basic residues. ANK repeat units follow at residues 329-359 (GGRTRLQIACDKGKYDVVKKMIEEGGYDIND), 363-392 (AGNTALHEAALQGHIEIVELLIENGADVNI), and 398-427 (FGDTPLIDASANGHLDVVKYLLKNGADPTI). The interval 472–516 (AGIHNDKSKNGNNAHTIDQPPFDNTTKAKNEKAADSPSMASNIDE) is disordered. Over residues 481–496 (NGNNAHTIDQPPFDNT) the composition is skewed to polar residues. S507 carries the phosphoserine modification. ANK repeat units follow at residues 532–561 (AGKEKLFKASKEGHLPYVGTYVENGGKIDL) and 593–622 (NKTSALMVAVGRGHLGTVKLLLEAGADPTK). 2 disordered regions span residues 661 to 742 (HSED…DDNE) and 762 to 790 (DEEKLKSISPLSMEPHSPKKAKSVEISKI). Acidic residues predominate over residues 665 to 675 (NNDDDDDDDNN). S698 carries the post-translational modification Phosphoserine. T700 is subject to Phosphothreonine. A compositionally biased stretch (basic and acidic residues) spans 721-740 (NNDRDVKESTTSDSRKRLDD). A Phosphoserine modification is found at S778.

Identified in the Set3C complex with HOS2, HST1, SNT1, SIF2, CPR1 and SET3.

Unknown. Component of the Set3C complex, which is required to repress early/middle sporulation genes during meiosis. This is Protein HOS4 (HOS4) from Saccharomyces cerevisiae (strain ATCC 204508 / S288c) (Baker's yeast).